We begin with the raw amino-acid sequence, 330 residues long: ADP-L-glycero-D-manno-heptose-6-epimerase (330 aa).

NADP(+) is bound by residues 11–12, 32–33, K39, K54, 75–79, and N92; these read FI, DN, and EGACS. Y139 functions as the Proton acceptor in the catalytic mechanism. K143 lines the NADP(+) pocket. A substrate-binding site is contributed by N168. 2 residues coordinate NADP(+): V169 and K177. The active-site Proton acceptor is the K177. Residues R179, H186, 200 to 203, R213, and Y292 each bind substrate; that span reads FGEY.

It belongs to the NAD(P)-dependent epimerase/dehydratase family. HldD subfamily. Homopentamer. The cofactor is NADP(+).

It catalyses the reaction ADP-D-glycero-beta-D-manno-heptose = ADP-L-glycero-beta-D-manno-heptose. The protein operates within nucleotide-sugar biosynthesis; ADP-L-glycero-beta-D-manno-heptose biosynthesis; ADP-L-glycero-beta-D-manno-heptose from D-glycero-beta-D-manno-heptose 7-phosphate: step 4/4. Catalyzes the interconversion between ADP-D-glycero-beta-D-manno-heptose and ADP-L-glycero-beta-D-manno-heptose via an epimerization at carbon 6 of the heptose. This is ADP-L-glycero-D-manno-heptose-6-epimerase from Burkholderia pseudomallei (strain 1026b).